A 160-amino-acid chain; its full sequence is Probable dihydroneopterin aldolase 3 (160 aa).

Substrate contacts are provided by residues Glu59, Phe91, and 110-111 (YE). The active-site Proton donor/acceptor is Lys137.

It belongs to the DHNA family. Homooctamer. Forms a hollow cylinder assembled from two ring-shaped tetramers. Expressed at very low levels in siliques.

The catalysed reaction is 7,8-dihydroneopterin = 6-hydroxymethyl-7,8-dihydropterin + glycolaldehyde. Its pathway is cofactor biosynthesis; tetrahydrofolate biosynthesis; 2-amino-4-hydroxy-6-hydroxymethyl-7,8-dihydropteridine diphosphate from 7,8-dihydroneopterin triphosphate: step 3/4. Its function is as follows. Catalyzes the conversion of 7,8-dihydroneopterin into 6-hydroxymethyl-7,8-dihydropterin, a biosynthetic precursor of the vitamin tetrahydrofolate. Can use L-threo-dihydroneopterin and D-erythro-dihydroneopterin as substrates for the formation of 6-hydroxymethyldihydropterin, but it can also catalyze the epimerization of carbon 2' of dihydroneopterin and dihydromonapterin. This chain is Probable dihydroneopterin aldolase 3, found in Arabidopsis thaliana (Mouse-ear cress).